Consider the following 115-residue polypeptide: NADH-ubiquinone oxidoreductase chain 3 (115 aa).

Transmembrane regions (helical) follow at residues 5 to 25 (LTFMTDVILALLLVMIAFWLP), 55 to 75 (FFLVAITFLLFDLEIALLLPL), and 86 to 106 (LMLTMALLLISILAAGLAYEW).

It belongs to the complex I subunit 3 family. In terms of assembly, core subunit of respiratory chain NADH dehydrogenase (Complex I) which is composed of 45 different subunits. Interacts with TMEM186. Interacts with TMEM242.

It is found in the mitochondrion inner membrane. The catalysed reaction is a ubiquinone + NADH + 5 H(+)(in) = a ubiquinol + NAD(+) + 4 H(+)(out). Its function is as follows. Core subunit of the mitochondrial membrane respiratory chain NADH dehydrogenase (Complex I) which catalyzes electron transfer from NADH through the respiratory chain, using ubiquinone as an electron acceptor. Essential for the catalytic activity of complex I. This is NADH-ubiquinone oxidoreductase chain 3 from Avahi unicolor (Sambirano woolly lemur).